A 238-amino-acid chain; its full sequence is Sugar fermentation stimulation protein homolog (238 aa).

Belongs to the SfsA family.

This is Sugar fermentation stimulation protein homolog from Brucella abortus (strain S19).